Consider the following 288-residue polypeptide: 33 kDa chaperonin (288 aa).

2 disulfide bridges follow: Cys236/Cys238 and Cys269/Cys272.

The protein belongs to the HSP33 family. Post-translationally, under oxidizing conditions two disulfide bonds are formed involving the reactive cysteines. Under reducing conditions zinc is bound to the reactive cysteines and the protein is inactive.

It is found in the cytoplasm. Redox regulated molecular chaperone. Protects both thermally unfolding and oxidatively damaged proteins from irreversible aggregation. Plays an important role in the bacterial defense system toward oxidative stress. The protein is 33 kDa chaperonin of Lactococcus lactis subsp. cremoris (strain MG1363).